The primary structure comprises 604 residues: Netrin-1 (604 aa).

Positions 1-24 are cleaved as a signal peptide; sequence MMRAVWEALAALAAVACLVGAVRG. The region spanning 47–284 is the Laminin N-terminal domain; sequence HPRRCIPDFV…AVSDLQVGGR (238 aa). N95, N116, and N131 each carry an N-linked (GlcNAc...) asparagine glycan. 15 disulfides stabilise this stretch: C119–C152, C285–C294, C287–C304, C306–C315, C318–C338, C341–C350, C343–C368, C371–C380, C383–C401, C404–C416, C406–C423, C425–C434, C437–C451, C472–C544, and C491–C601. Laminin EGF-like domains follow at residues 285 to 340, 341 to 403, and 404 to 453; these read CKCN…ECVA, CNCN…ACKA, and CDCH…PCIK. N-linked (GlcNAc...) asparagine glycosylation occurs at N417. One can recognise an NTR domain in the interval 472–601; sequence CDSYCKASKG…FQQREKKGKC (130 aa). A Cell attachment site motif is present at residues 530 to 532; sequence RGD.

Binds to its receptors; DCC, UNC5A, UNC5B, UNC5C and probably UNC5D. Binds to its receptor; DSCAM. Interacts with DCC. Interacts with APP. As to expression, widely expressed in normal adult tissues with highest levels in heart, small intestine, colon, liver and prostate. Reduced expression in brain tumors and neuroblastomas. Expressed in epididymis (at protein level).

It is found in the secreted. It localises to the cytoplasm. Its function is as follows. Netrins control guidance of CNS commissural axons and peripheral motor axons. Its association with either DCC or some UNC5 receptors will lead to axon attraction or repulsion, respectively. Binding to UNC5C might cause dissociation of UNC5C from polymerized TUBB3 in microtubules and thereby lead to increased microtubule dynamics and axon repulsion. Involved in dorsal root ganglion axon projection towards the spinal cord. It also serves as a survival factor via its association with its receptors which prevent the initiation of apoptosis. Involved in tumorigenesis by regulating apoptosis. This Homo sapiens (Human) protein is Netrin-1 (NTN1).